The sequence spans 957 residues: Valine--tRNA ligase (957 aa).

A 'HIGH' region motif is present at residues 45-55 (PNVTGSLHMGH). A 'KMSKS' region motif is present at residues 571–575 (KMSKS). Residue Lys-574 participates in ATP binding. The stretch at 887-946 (VVDFAAEQARLEKELGKAEADIKRAEAKLANEKFVANAAEEVVEEEREKREAAVARKVKI) forms a coiled coil.

It belongs to the class-I aminoacyl-tRNA synthetase family. ValS type 1 subfamily. As to quaternary structure, monomer.

The protein resides in the cytoplasm. It carries out the reaction tRNA(Val) + L-valine + ATP = L-valyl-tRNA(Val) + AMP + diphosphate. Functionally, catalyzes the attachment of valine to tRNA(Val). As ValRS can inadvertently accommodate and process structurally similar amino acids such as threonine, to avoid such errors, it has a 'posttransfer' editing activity that hydrolyzes mischarged Thr-tRNA(Val) in a tRNA-dependent manner. This chain is Valine--tRNA ligase, found in Rhodopseudomonas palustris (strain ATCC BAA-98 / CGA009).